The sequence spans 566 residues: CTP synthase (566 aa).

The tract at residues 1–270 (MTKFVFVTGG…DGLICDKLRL (270 aa)) is amidoligase domain. Serine 13 serves as a coordination point for CTP. Residue serine 13 participates in UTP binding. Residues 14-19 (SLGKGI) and aspartate 71 each bind ATP. Mg(2+)-binding residues include aspartate 71 and glutamate 144. CTP is bound by residues 151–153 (DIE), 191–196 (KTKPTQ), and lysine 227. UTP contacts are provided by residues 191–196 (KTKPTQ) and lysine 227. Positions 295-547 (SIAMVGKYVD…IAATLEQRSA (253 aa)) constitute a Glutamine amidotransferase type-1 domain. Glycine 356 contributes to the L-glutamine binding site. Cysteine 383 acts as the Nucleophile; for glutamine hydrolysis in catalysis. L-glutamine is bound by residues 384-387 (LGMQ), glutamate 407, and arginine 473. Catalysis depends on residues histidine 520 and glutamate 522.

This sequence belongs to the CTP synthase family. In terms of assembly, homotetramer.

The enzyme catalyses UTP + L-glutamine + ATP + H2O = CTP + L-glutamate + ADP + phosphate + 2 H(+). It carries out the reaction L-glutamine + H2O = L-glutamate + NH4(+). It catalyses the reaction UTP + NH4(+) + ATP = CTP + ADP + phosphate + 2 H(+). The protein operates within pyrimidine metabolism; CTP biosynthesis via de novo pathway; CTP from UDP: step 2/2. Its activity is regulated as follows. Allosterically activated by GTP, when glutamine is the substrate; GTP has no effect on the reaction when ammonia is the substrate. The allosteric effector GTP functions by stabilizing the protein conformation that binds the tetrahedral intermediate(s) formed during glutamine hydrolysis. Inhibited by the product CTP, via allosteric rather than competitive inhibition. Catalyzes the ATP-dependent amination of UTP to CTP with either L-glutamine or ammonia as the source of nitrogen. Regulates intracellular CTP levels through interactions with the four ribonucleotide triphosphates. This Polaromonas naphthalenivorans (strain CJ2) protein is CTP synthase.